Consider the following 313-residue polypeptide: Heterogeneous nuclear ribonucleoproteins C1/C2 (313 aa).

Ala-2 bears the N-acetylalanine mark. Residues Lys-8, Lys-50, Lys-89, and Lys-94 each participate in a glycyl lysine isopeptide (Lys-Gly) (interchain with G-Cter in SUMO2) cross-link. The RRM domain maps to 16–87 (SRVFIGNLNT…QVLDINLAAE (72 aa)). 3 positions are modified to phosphoserine: Ser-113, Ser-115, and Ser-121. 2 disordered regions span residues 139-191 (YPAR…KLKG) and 219-313 (EKEQ…EDDS). The Nuclear localization signal signature appears at 155 to 161 (PSKRQRV). Phosphoserine is present on residues Ser-162 and Ser-166. Low complexity predominate over residues 175 to 186 (SKSGQRGSSSKS). Lys-176 bears the N6-acetyllysine; alternate mark. Lys-176 is covalently cross-linked (Glycyl lysine isopeptide (Lys-Gly) (interchain with G-Cter in SUMO2); alternate). Positions 191-226 (GDDLQAIKKELTQIKQKVDSLLESLEKIEKEQSKQA) form a coiled coil. Lys-224 is covalently cross-linked (Glycyl lysine isopeptide (Lys-Gly) (interchain with G-Cter in SUMO2)). Phosphoserine is present on residues Ser-229, Ser-231, and Ser-232. Lys-237 participates in a covalent cross-link: Glycyl lysine isopeptide (Lys-Gly) (interchain with G-Cter in SUMO2). Lys-240 participates in a covalent cross-link: Glycyl lysine isopeptide (Lys-Gly) (interchain with G-Cter in SUMO2); alternate. Residue Lys-240 forms a Glycyl lysine isopeptide (Lys-Gly) (interchain with G-Cter in SUMO1); alternate linkage. Phosphoserine is present on residues Ser-241, Ser-246, Ser-247, and Ser-249. The segment covering 250 to 261 (VKKDETNVKMES) has biased composition (basic and acidic residues). Residues Lys-251 and Lys-252 each participate in a glycyl lysine isopeptide (Lys-Gly) (interchain with G-Cter in SUMO2) cross-link. Residue Lys-258 forms a Glycyl lysine isopeptide (Lys-Gly) (interchain with G-Cter in SUMO2); alternate linkage. Residue Lys-258 forms a Glycyl lysine isopeptide (Lys-Gly) (interchain with G-Cter in SUMO); alternate linkage. Residues Ser-261 and Ser-268 each carry the phosphoserine modification. The span at 263 to 284 (AGADDSAEEGDLLDDDDNEDRG) shows a compositional bias: acidic residues. Over residues 285-294 (DDQLELKDDE) the composition is skewed to basic and acidic residues. The segment covering 295-313 (KEPEEGEDDRDSANGEDDS) has biased composition (acidic residues). Phosphoserine is present on residues Ser-306 and Ser-313.

The protein belongs to the RRM HNRPC family. RALY subfamily. As to quaternary structure, tetramer composed of 3 copies of isoform C1 and 1 copy of isoform C2. Assembly of 3 tetramers with bound pre-mRNA gives rise to a 19S complex that interacts with HNRNPA2B1 tetramers. Component of the 40S hnRNP particle. Identified in the spliceosome C complex. Interacts with IGF2BP1. Interacts with DHX9; this interaction is direct, enhanced probably by their concomitant binding to RNA and mediates the attachment to actin filaments. Interacts with PPIA/CYPA. In terms of processing, phosphorylated on Ser-268 and Ser-306 in resting cells. Post-translationally, sumoylated. Sumoylation reduces affinity for mRNA. Ubiquitinated and degraded after nucleo-cytoplasmic transport by YWHAE.

It is found in the nucleus. In terms of biological role, binds pre-mRNA and nucleates the assembly of 40S hnRNP particles. Interacts with poly-U tracts in the 3'-UTR or 5'-UTR of mRNA and modulates the stability and the level of translation of bound mRNA molecules. Single HNRNPC tetramers bind 230-240 nucleotides. Trimers of HNRNPC tetramers bind 700 nucleotides. May play a role in the early steps of spliceosome assembly and pre-mRNA splicing. N6-methyladenosine (m6A) has been shown to alter the local structure in mRNAs and long non-coding RNAs (lncRNAs) via a mechanism named 'm(6)A-switch', facilitating binding of HNRNPC, leading to regulation of mRNA splicing. This is Heterogeneous nuclear ribonucleoproteins C1/C2 (Hnrnpc) from Mus musculus (Mouse).